Here is a 90-residue protein sequence, read N- to C-terminus: Probable Fe(2+)-trafficking protein (90 aa).

It belongs to the Fe(2+)-trafficking protein family.

In terms of biological role, could be a mediator in iron transactions between iron acquisition and iron-requiring processes, such as synthesis and/or repair of Fe-S clusters in biosynthetic enzymes. In Dechloromonas aromatica (strain RCB), this protein is Probable Fe(2+)-trafficking protein.